Here is a 708-residue protein sequence, read N- to C-terminus: Ribosomal RNA large subunit methyltransferase K/L (708 aa).

The THUMP domain occupies 43–154 (QIYRCCLWSR…KENALLGIDM (112 aa)).

Belongs to the methyltransferase superfamily. RlmKL family.

Its subcellular location is the cytoplasm. The catalysed reaction is guanosine(2445) in 23S rRNA + S-adenosyl-L-methionine = N(2)-methylguanosine(2445) in 23S rRNA + S-adenosyl-L-homocysteine + H(+). It catalyses the reaction guanosine(2069) in 23S rRNA + S-adenosyl-L-methionine = N(2)-methylguanosine(2069) in 23S rRNA + S-adenosyl-L-homocysteine + H(+). Its function is as follows. Specifically methylates the guanine in position 2445 (m2G2445) and the guanine in position 2069 (m7G2069) of 23S rRNA. The protein is Ribosomal RNA large subunit methyltransferase K/L of Vibrio cholerae serotype O1 (strain ATCC 39541 / Classical Ogawa 395 / O395).